The following is a 340-amino-acid chain: Gallate dioxygenase (340 aa).

H45 acts as the Proton donor in catalysis. The active-site Proton acceptor is the H113.

The protein belongs to the LigB/MhpB extradiol dioxygenase family. It depends on Fe(2+) as a cofactor.

The catalysed reaction is 3,4,5-trihydroxybenzoate + O2 = (1E)-4-oxobut-1-ene-1,2,4-tricarboxylate + 2 H(+). Ring-cleavage dioxygenase that acts specifically on gallate to produce the keto-tautomer of 4-oxalomesaconate. Mediates the first step of gallate degradation pathway. This is Gallate dioxygenase (galA) from Pseudomonas putida (strain ATCC 47054 / DSM 6125 / CFBP 8728 / NCIMB 11950 / KT2440).